A 275-amino-acid polypeptide reads, in one-letter code: Large ribosomal subunit protein uL2 (275 aa).

Positions 223–275 (GVVMNPVDHPHGGGEGRGKGHHPQSPWGVPAKGYKTRRGKRASDKFIVRRRNG) are disordered. Residues 230 to 240 (DHPHGGGEGRG) show a composition bias toward basic and acidic residues.

Belongs to the universal ribosomal protein uL2 family. In terms of assembly, part of the 50S ribosomal subunit. Forms a bridge to the 30S subunit in the 70S ribosome.

In terms of biological role, one of the primary rRNA binding proteins. Required for association of the 30S and 50S subunits to form the 70S ribosome, for tRNA binding and peptide bond formation. It has been suggested to have peptidyltransferase activity; this is somewhat controversial. Makes several contacts with the 16S rRNA in the 70S ribosome. This is Large ribosomal subunit protein uL2 from Fervidobacterium nodosum (strain ATCC 35602 / DSM 5306 / Rt17-B1).